Reading from the N-terminus, the 209-residue chain is Redox-sensing transcriptional repressor Rex (209 aa).

The segment at residues 16-55 (LYYRFIQNLSLSGKQRVSSAELSEAVKVDSATIRRDFSYF) is a DNA-binding region (H-T-H motif). Residue 90-95 (GVGNLG) participates in NAD(+) binding.

It belongs to the transcriptional regulatory Rex family. As to quaternary structure, homodimer.

It is found in the cytoplasm. Functionally, modulates transcription in response to changes in cellular NADH/NAD(+) redox state. The protein is Redox-sensing transcriptional repressor Rex of Bacillus cytotoxicus (strain DSM 22905 / CIP 110041 / 391-98 / NVH 391-98).